The chain runs to 258 residues: Imidazole glycerol phosphate synthase subunit HisF (258 aa).

Residues D12 and D131 contribute to the active site.

Belongs to the HisA/HisF family. In terms of assembly, heterodimer of HisH and HisF.

It localises to the cytoplasm. The catalysed reaction is 5-[(5-phospho-1-deoxy-D-ribulos-1-ylimino)methylamino]-1-(5-phospho-beta-D-ribosyl)imidazole-4-carboxamide + L-glutamine = D-erythro-1-(imidazol-4-yl)glycerol 3-phosphate + 5-amino-1-(5-phospho-beta-D-ribosyl)imidazole-4-carboxamide + L-glutamate + H(+). It functions in the pathway amino-acid biosynthesis; L-histidine biosynthesis; L-histidine from 5-phospho-alpha-D-ribose 1-diphosphate: step 5/9. Its function is as follows. IGPS catalyzes the conversion of PRFAR and glutamine to IGP, AICAR and glutamate. The HisF subunit catalyzes the cyclization activity that produces IGP and AICAR from PRFAR using the ammonia provided by the HisH subunit. In Corynebacterium glutamicum (strain R), this protein is Imidazole glycerol phosphate synthase subunit HisF.